We begin with the raw amino-acid sequence, 688 residues long: Glycine--tRNA ligase beta subunit (688 aa).

It belongs to the class-II aminoacyl-tRNA synthetase family. As to quaternary structure, tetramer of two alpha and two beta subunits.

It is found in the cytoplasm. It carries out the reaction tRNA(Gly) + glycine + ATP = glycyl-tRNA(Gly) + AMP + diphosphate. The polypeptide is Glycine--tRNA ligase beta subunit (Shewanella sp. (strain MR-4)).